We begin with the raw amino-acid sequence, 150 residues long: Ribosome maturation factor RimP (150 aa).

This sequence belongs to the RimP family.

It is found in the cytoplasm. In terms of biological role, required for maturation of 30S ribosomal subunits. This chain is Ribosome maturation factor RimP, found in Klebsiella pneumoniae (strain 342).